We begin with the raw amino-acid sequence, 437 residues long: Adenosylhomocysteinase (437 aa).

Positions 54, 130, and 155 each coordinate substrate. Position 156–158 (156–158 (TTT)) interacts with NAD(+). Substrate contacts are provided by Lys-185 and Asp-189. Residues Asn-190, 219 to 224 (GYGDVG), Glu-242, Asn-277, 298 to 300 (IGH), and Asn-345 contribute to the NAD(+) site.

This sequence belongs to the adenosylhomocysteinase family. Homotetramer. The cofactor is NAD(+).

It is found in the cytoplasm. It catalyses the reaction S-adenosyl-L-homocysteine + H2O = L-homocysteine + adenosine. It participates in amino-acid biosynthesis; L-homocysteine biosynthesis; L-homocysteine from S-adenosyl-L-homocysteine: step 1/1. Its function is as follows. Adenosylhomocysteine is a competitive inhibitor of S-adenosyl-L-methionine-dependent methyl transferase reactions; therefore adenosylhomocysteinase may play a key role in the control of methylations via regulation of the intracellular concentration of adenosylhomocysteine. This is Adenosylhomocysteinase from Leishmania donovani.